The primary structure comprises 626 residues: Extracellular metalloproteinase 1 (626 aa).

The signal sequence occupies residues Met1–Ser17. Residues His18–Asp241 constitute a propeptide that is removed on maturation. Asn315 carries N-linked (GlcNAc...) asparagine glycosylation. His425 lines the Zn(2+) pocket. Residue Glu426 is part of the active site. His429 contacts Zn(2+). The segment at Gly606–Cys626 is disordered. Positions Arg610–Cys626 are enriched in polar residues.

The protein belongs to the peptidase M36 family. Zn(2+) serves as cofactor.

Its subcellular location is the secreted. Secreted metalloproteinase that allows assimilation of proteinaceous substrates. This is Extracellular metalloproteinase 1 (MEP1) from Phaeosphaeria nodorum (strain SN15 / ATCC MYA-4574 / FGSC 10173) (Glume blotch fungus).